The following is a 272-amino-acid chain: Regulatory factor X-associated protein (272 aa).

3 disordered regions span residues 1–20 (MEAQGVAEGAGPGAASGVPH), 74–142 (LCEG…KTCT), and 175–195 (KKKKSDQALNCGGTASTGSAG). Residues 79–94 (GDGEEEAGEDEADLLD) show a composition bias toward acidic residues. The Nuclear localization signal signature appears at 163-178 (KKHRNKMYKDKYKKKK). Residue K198 forms a Glycyl lysine isopeptide (Lys-Gly) (interchain with G-Cter in SUMO2) linkage. Residues 214-270 (TGSFGDRPARPTLLEQVLNQKRLSLLRSPEVVQFLQKQQQLLNQQVLEQRQQQFPGT) form a C-terminal domain region.

As to quaternary structure, the RFX heterotetrameric complex consists of 2 molecules of RFX5 and one each of RFXAP and RFX-B/RFXANK; with each subunit representing a separate complementation group. RFX forms cooperative DNA binding complexes with X2BP and CBF/NF-Y. RFX associates with CIITA to form an active transcriptional complex. Post-translationally, phosphorylated. Ubiquitous.

It is found in the nucleus. Part of the RFX complex that binds to the X-box of MHC II promoters. The protein is Regulatory factor X-associated protein (RFXAP) of Homo sapiens (Human).